The following is a 290-amino-acid chain: 4-hydroxy-3-methylbut-2-enyl diphosphate reductase (290 aa).

[4Fe-4S] cluster is bound at residue C13. Positions 41 and 75 each coordinate (2E)-4-hydroxy-3-methylbut-2-enyl diphosphate. Residues H41 and H75 each contribute to the dimethylallyl diphosphate site. Isopentenyl diphosphate is bound by residues H41 and H75. Position 97 (C97) interacts with [4Fe-4S] cluster. H129 provides a ligand contact to (2E)-4-hydroxy-3-methylbut-2-enyl diphosphate. Residue H129 coordinates dimethylallyl diphosphate. Residue H129 participates in isopentenyl diphosphate binding. Residue E131 is the Proton donor of the active site. Position 167 (T167) interacts with (2E)-4-hydroxy-3-methylbut-2-enyl diphosphate. Position 198 (C198) interacts with [4Fe-4S] cluster. Residues S226, S227, N228, and S270 each contribute to the (2E)-4-hydroxy-3-methylbut-2-enyl diphosphate site. The dimethylallyl diphosphate site is built by S226, S227, N228, and S270. Residues S226, S227, N228, and S270 each contribute to the isopentenyl diphosphate site.

The protein belongs to the IspH family. Requires [4Fe-4S] cluster as cofactor.

It carries out the reaction isopentenyl diphosphate + 2 oxidized [2Fe-2S]-[ferredoxin] + H2O = (2E)-4-hydroxy-3-methylbut-2-enyl diphosphate + 2 reduced [2Fe-2S]-[ferredoxin] + 2 H(+). It catalyses the reaction dimethylallyl diphosphate + 2 oxidized [2Fe-2S]-[ferredoxin] + H2O = (2E)-4-hydroxy-3-methylbut-2-enyl diphosphate + 2 reduced [2Fe-2S]-[ferredoxin] + 2 H(+). It functions in the pathway isoprenoid biosynthesis; dimethylallyl diphosphate biosynthesis; dimethylallyl diphosphate from (2E)-4-hydroxy-3-methylbutenyl diphosphate: step 1/1. It participates in isoprenoid biosynthesis; isopentenyl diphosphate biosynthesis via DXP pathway; isopentenyl diphosphate from 1-deoxy-D-xylulose 5-phosphate: step 6/6. In terms of biological role, catalyzes the conversion of 1-hydroxy-2-methyl-2-(E)-butenyl 4-diphosphate (HMBPP) into a mixture of isopentenyl diphosphate (IPP) and dimethylallyl diphosphate (DMAPP). Acts in the terminal step of the DOXP/MEP pathway for isoprenoid precursor biosynthesis. The polypeptide is 4-hydroxy-3-methylbut-2-enyl diphosphate reductase (Parabacteroides distasonis (strain ATCC 8503 / DSM 20701 / CIP 104284 / JCM 5825 / NCTC 11152)).